The primary structure comprises 297 residues: Cell division protein FtsX (297 aa).

Over 1–24 (MKAKTLSRHLREGVKNLSRNGWMT) the chain is Cytoplasmic. The helical transmembrane segment at 25-45 (FASVSAVTVTLLLVGVFLTAI) threads the bilayer. The Extracellular segment spans residues 46–171 (MNMNHFATKV…LFDTVKTGRN (126 aa)). Residues 172 to 192 (IGIVLIAGLLFTAMFLISNTI) traverse the membrane as a helical segment. At 193–219 (KITIYARSTEIEIMKLVGATNWFIRWP) the chain is on the cytoplasmic side. Residues 220 to 240 (FLLEGLFLGVLGSIIPIGLIL) traverse the membrane as a helical segment. The Extracellular portion of the chain corresponds to 241–270 (VTYNSLQGMFNEKLGGTIFELLPYSPFVFQ). The chain crosses the membrane as a helical span at residues 271-291 (LAGLLVLIGALIGMWGSVMSI). Topologically, residues 292–297 (RRFLKV) are cytoplasmic.

Belongs to the ABC-4 integral membrane protein family. FtsX subfamily. As to quaternary structure, interacts with FtsE.

Its subcellular location is the cell membrane. Its function is as follows. Part of the ABC transporter FtsEX involved in asymmetric cellular division facilitating the initiation of sporulation. In Bacillus anthracis, this protein is Cell division protein FtsX.